The following is a 1074-amino-acid chain: DNA double-strand break repair Rad50 ATPase (1074 aa).

Residues Arg12, 32 to 38 (NGSGKSS), and Gln142 contribute to the ATP site. Coiled coils occupy residues 355-402 (ELEK…REKA) and 452-506 (NLVE…KGLG). The Zinc-hook domain occupies 512-611 (LENLEDFSEL…KITRLKDAKK (100 aa)). Residues Cys559 and Cys562 each coordinate Zn(2+). Coiled-coil stretches lie at residues 574 to 611 (TAEE…DAKK), 649 to 678 (LKLE…LQVQ), 749 to 823 (KEKL…EILE), and 865 to 895 (TEEK…LKAL). Position 973 to 978 (973 to 978 (LLSGGE)) interacts with ATP.

Belongs to the SMC family. RAD50 subfamily. In terms of assembly, homodimer. Forms a heterotetramer composed of two Mre11 subunits and two Rad50 subunits. The cofactor is Zn(2+).

Part of the Rad50/Mre11 complex, which is involved in the early steps of DNA double-strand break (DSB) repair. The complex may facilitate opening of the processed DNA ends to aid in the recruitment of HerA and NurA. Rad50 controls the balance between DNA end bridging and DNA resection via ATP-dependent structural rearrangements of the Rad50/Mre11 complex. The chain is DNA double-strand break repair Rad50 ATPase from Methanosarcina acetivorans (strain ATCC 35395 / DSM 2834 / JCM 12185 / C2A).